We begin with the raw amino-acid sequence, 1180 residues long: IQ domain-containing protein N (1180 aa).

Positions 34–78 (HPPAPAHPSLLDKMEKAPPQPQHEGLKSKEHLPQQPAEGKTASRR) are disordered. Residues 103-132 (HARAATLIQANWRGYWLRQKLISQMMAAKA) enclose the IQ 1 domain. Disordered stretches follow at residues 283–324 (RVSA…ETPK), 476–496 (MSKT…PQTR), and 786–820 (QRLG…TQGG). 5 consecutive IQ domains span residues 926 to 955 (RILA…GAMV), 956 to 978 (IQAT…ATTT), 979 to 1001 (IQSA…MLHP), 1113 to 1142 (QDKA…AAKI), and 1143 to 1165 (VQAT…LLGP).

In terms of assembly, interacts with calmodulin.

Its function is as follows. Essential for spermiogenesis and fertilization. May be required for manchette assembly in elongating spermatids. The chain is IQ domain-containing protein N from Homo sapiens (Human).